A 406-amino-acid polypeptide reads, in one-letter code: CinA-like protein (406 aa).

This sequence belongs to the CinA family.

This is CinA-like protein from Pseudothermotoga lettingae (strain ATCC BAA-301 / DSM 14385 / NBRC 107922 / TMO) (Thermotoga lettingae).